Reading from the N-terminus, the 121-residue chain is Ribosome-binding factor A (121 aa).

This sequence belongs to the RbfA family. As to quaternary structure, monomer. Binds 30S ribosomal subunits, but not 50S ribosomal subunits or 70S ribosomes.

Its subcellular location is the cytoplasm. In terms of biological role, one of several proteins that assist in the late maturation steps of the functional core of the 30S ribosomal subunit. Associates with free 30S ribosomal subunits (but not with 30S subunits that are part of 70S ribosomes or polysomes). Required for efficient processing of 16S rRNA. May interact with the 5'-terminal helix region of 16S rRNA. The polypeptide is Ribosome-binding factor A (Lactobacillus helveticus (strain DPC 4571)).